A 546-amino-acid polypeptide reads, in one-letter code: Immunoglobulin-like domain-containing receptor 1 (546 aa).

A signal peptide spans 1–23 (MAWPKLPAPWLLLCTWLPAGCLS). Positions 24-162 (LLVTVQHTER…TSGDPDKEVK (139 aa)) constitute an Ig-like V-type domain. Topologically, residues 24–167 (LLVTVQHTER…DKEVKLIVLH (144 aa)) are extracellular. A disulfide bond links cysteine 45 and cysteine 145. Residues 168 to 188 (WLTVIFIILGALLLLLLIGVC) form a helical membrane-spanning segment. The Cytoplasmic portion of the chain corresponds to 189–546 (WCQCCPQYCC…SSHSGRSVVI (358 aa)). The interval 399–546 (WSGRHRSSRL…SSHSGRSVVI (148 aa)) is disordered. Residues 442–457 (RCQERPRRPSPRESTQ) show a composition bias toward basic and acidic residues. Positions 458 to 467 (RHGRRRRHRS) are enriched in basic residues. Residues serine 499 and serine 501 each carry the phosphoserine modification. A compositionally biased stretch (basic and acidic residues) spans 527-539 (GSVERRSEKDSSH).

Belongs to the immunoglobulin superfamily. LISCH7 family. In terms of assembly, homooligomer. Interacts with MARVELD2 and OCLN; the interaction is required to recruit MARVELD2 to tricellular contacts. Interacts (via C-terminus) with TRA2A, TRA2B and SRSF1. Interacts with PLSCR1. As to expression, mainly expressed in prostate and to a lower extent in testis, pancreas, kidney, heart and liver.

Its subcellular location is the cell membrane. It is found in the cell junction. The protein resides in the tight junction. The protein localises to the cytoplasm. It localises to the cytosol. Its function is as follows. Maintains epithelial barrier function by recruiting MARVELD2/tricellulin to tricellular tight junctions (tTJs). Crucial for normal hearing by maintaining the structural and functional integrity of tTJs, which are critical for the survival of auditory neurosensory HCs. Mediates fatty acids and lipoproteins-stimulated CCK/cholecystokinin secretion in the small intestine. In the inner ear, may regulate alternative pre-mRNA splicing via binding to TRA2A, TRA2B and SRSF1. (Microbial infection) Promotes influenza virus infection by inhibiting viral nucleoprotein NP binding to PLSCR1 and thereby PLSCR1-mediated antiviral activity. The polypeptide is Immunoglobulin-like domain-containing receptor 1 (Homo sapiens (Human)).